Consider the following 431-residue polypeptide: Gamma-glutamyl phosphate reductase (431 aa).

The protein belongs to the gamma-glutamyl phosphate reductase family.

It localises to the cytoplasm. The catalysed reaction is L-glutamate 5-semialdehyde + phosphate + NADP(+) = L-glutamyl 5-phosphate + NADPH + H(+). The protein operates within amino-acid biosynthesis; L-proline biosynthesis; L-glutamate 5-semialdehyde from L-glutamate: step 2/2. Catalyzes the NADPH-dependent reduction of L-glutamate 5-phosphate into L-glutamate 5-semialdehyde and phosphate. The product spontaneously undergoes cyclization to form 1-pyrroline-5-carboxylate. The protein is Gamma-glutamyl phosphate reductase of Beijerinckia indica subsp. indica (strain ATCC 9039 / DSM 1715 / NCIMB 8712).